A 993-amino-acid chain; its full sequence is UPF0182 protein ROP_64500 (993 aa).

7 consecutive transmembrane segments (helical) span residues 18-38 (VLLV…RLIS), 63-83 (LLLF…ALLL), 114-134 (LFGL…AQSS), 174-194 (WLFV…YIFG), 211-231 (VQLA…YWFD), 260-280 (KLIL…AIFL), and 288-308 (MATA…PLVV). A disordered region spans residues 904-948 (TGSVATAPSAEEGTPPETGTTPPVEQGAAPPAPTAPATPPSGTDV). Residues 908–926 (ATAPSAEEGTPPETGTTPP) show a composition bias toward low complexity. The segment covering 933–942 (PPAPTAPATP) has biased composition (pro residues).

Belongs to the UPF0182 family.

Its subcellular location is the cell membrane. This Rhodococcus opacus (strain B4) protein is UPF0182 protein ROP_64500.